We begin with the raw amino-acid sequence, 215 residues long: ATP-dependent Clp protease proteolytic subunit (215 aa).

Ser116 (nucleophile) is an active-site residue. Residue His141 is part of the active site.

Belongs to the peptidase S14 family. In terms of assembly, fourteen ClpP subunits assemble into 2 heptameric rings which stack back to back to give a disk-like structure with a central cavity, resembling the structure of eukaryotic proteasomes.

It localises to the cytoplasm. It carries out the reaction Hydrolysis of proteins to small peptides in the presence of ATP and magnesium. alpha-casein is the usual test substrate. In the absence of ATP, only oligopeptides shorter than five residues are hydrolyzed (such as succinyl-Leu-Tyr-|-NHMec, and Leu-Tyr-Leu-|-Tyr-Trp, in which cleavage of the -Tyr-|-Leu- and -Tyr-|-Trp bonds also occurs).. Its function is as follows. Cleaves peptides in various proteins in a process that requires ATP hydrolysis. Has a chymotrypsin-like activity. Plays a major role in the degradation of misfolded proteins. This Psychrobacter cryohalolentis (strain ATCC BAA-1226 / DSM 17306 / VKM B-2378 / K5) protein is ATP-dependent Clp protease proteolytic subunit.